The primary structure comprises 420 residues: GDP-mannose transporter 2 (420 aa).

Over residues 1-11 (MASYTPSSSRP) the composition is skewed to polar residues. Residues 1–21 (MASYTPSSSRPHTPLGLSPRG) form a disordered region. Residues 1-76 (MASYTPSSSR…KAKKEEVCMP (76 aa)) lie on the Cytoplasmic side of the membrane. The helical transmembrane segment at 77-97 (ASTTVLPILSYCVASIMMTVV) threads the bilayer. At 98–106 (NKFVVSGRQ) the chain is on the lumenal side. The chain crosses the membrane as a helical span at residues 107–127 (FTMTFLLLAIQSFVCVACVWL). Topologically, residues 128-145 (AKRIGVINFRDWDMNDAK) are cytoplasmic. Residues 146 to 168 (AWFPVSSLLVAVIYTGSKSLQFL) traverse the membrane as a helical segment. The Lumenal portion of the chain corresponds to 169-171 (SIP). The chain crosses the membrane as a helical span at residues 172-194 (VYTIFKNLTIILIAYGEVIWFGG). The Cytoplasmic portion of the chain corresponds to 195–200 (HVTPLT). A helical membrane pass occupies residues 201–223 (LCSFFLMVGSSVIAAWADISTTL). Topologically, residues 224–251 (SKLSAGVAVVDPISGADVPLSSISVMDT) are lumenal. A helical transmembrane segment spans residues 252 to 272 (MNVGYLWMFINCLASAGYVLF). The Cytoplasmic segment spans residues 273 to 293 (MRKRIKVTGFKDWDSMFYNNL). The helical transmembrane segment at 294–314 (LSIPVLFVFSLIIEDWGAASF) threads the bilayer. Topologically, residues 315-323 (SRNFPEEGR) are lumenal. Residues 324 to 344 (AFLLSAIAFSGAAAVFISYST) traverse the membrane as a helical segment. The Cytoplasmic segment spans residues 345–355 (AWCVRICGATT). The helical transmembrane segment at 356–376 (YSLVGALNKLPVAASGILFFG) threads the bilayer. Residues 377-378 (DP) are Lumenal-facing. The chain crosses the membrane as a helical span at residues 379–399 (VNFGNVSAILVGGVSGIVYAV). Topologically, residues 400–420 (AKTNQAKVEKSKQARGGESKA) are cytoplasmic.

Belongs to the TPT transporter family. SLC35D subfamily. In terms of assembly, homooligomer.

It is found in the golgi apparatus membrane. Its subcellular location is the cytoplasmic vesicle membrane. It localises to the endoplasmic reticulum membrane. In terms of biological role, involved in the import of GDP-mannose from the cytoplasm into the Golgi lumen. The chain is GDP-mannose transporter 2 (GMT2) from Cryptococcus neoformans var. neoformans serotype D (strain B-3501A) (Filobasidiella neoformans).